A 186-amino-acid chain; its full sequence is Dirigent protein 4 (186 aa).

The signal sequence occupies residues 1 to 20 (MGKNLGLVVSFYLCITFALG). Residues Asn67, Asn126, Asn169, and Asn180 are each glycosylated (N-linked (GlcNAc...) asparagine).

It belongs to the plant dirigent protein family. In terms of assembly, homodimer.

Its subcellular location is the secreted. The protein resides in the extracellular space. It localises to the apoplast. In terms of biological role, dirigent proteins impart stereoselectivity on the phenoxy radical-coupling reaction, yielding optically active lignans from two molecules of coniferyl alcohol in the biosynthesis of lignans, flavonolignans, and alkaloids and thus plays a central role in plant secondary metabolism. The protein is Dirigent protein 4 (DIR4) of Arabidopsis thaliana (Mouse-ear cress).